Reading from the N-terminus, the 144-residue chain is UPF0179 protein PF1381 (144 aa).

Belongs to the UPF0179 family.

The sequence is that of UPF0179 protein PF1381 from Pyrococcus furiosus (strain ATCC 43587 / DSM 3638 / JCM 8422 / Vc1).